We begin with the raw amino-acid sequence, 687 residues long: Putative metabolite transport protein YDL199C (687 aa).

A disordered region spans residues 1-22 (MKPPLNMSRSNKPLTQEANSSA). Residues 1-122 (MKPPLNMSRS…RHSSRVLRTS (122 aa)) lie on the Extracellular side of the membrane. Positions 7–22 (MSRSNKPLTQEANSSA) are enriched in polar residues. Ser90 carries the post-translational modification Phosphoserine. A helical transmembrane segment spans residues 123-143 (FISFVVLVSSLSGLDQGLISG). The Cytoplasmic segment spans residues 144–164 (NVMTLSFQKYFHYPLTSPLGN). A helical membrane pass occupies residues 165 to 185 (IVSIVNLGAFMASLFVYSGIL). Topologically, residues 186-192 (EPCSRKK) are extracellular. A helical membrane pass occupies residues 193–213 (MLQISTMIYSLGAIVQVLALN). The Cytoplasmic segment spans residues 214–216 (QWC). A helical membrane pass occupies residues 217-237 (LLLGRFLLGVGMGFAFSMVII). The Extracellular segment spans residues 238-251 (YQFEFPLPCIRKRT). Residues 252-272 (LISIQCVSSVIAYSFGIWINC) traverse the membrane as a helical segment. Residues 273 to 283 (AFRYLGFAWRY) are Cytoplasmic-facing. A helical membrane pass occupies residues 284 to 304 (PLSTHVALGIILNLMSFYLIL). Over 305-410 (ESPSWLLKQK…MGRGERKSIY (106 aa)) the chain is Extracellular. Residues 411–431 (LTGLNALIYSIVILAYVPLVL) traverse the membrane as a helical segment. At 432 to 439 (RKRKEKTN) the chain is on the cytoplasmic side. Residues 440–460 (VLLGSIVMCALLFTISFTDWF) traverse the membrane as a helical segment. The Extracellular portion of the chain corresponds to 461 to 469 (PKSTTRYIS). The chain crosses the membrane as a helical span at residues 470 to 490 (ILFAVFLFTHFISWDSIGWVM). The Cytoplasmic segment spans residues 491–500 (TIELLPHLSQ). Residues 501–521 (APVILLVSNFYWIFKWFVSLI) form a helical membrane-spanning segment. Over 522–533 (TPILIDRLSWKF) the chain is Extracellular. A helical transmembrane segment spans residues 534-554 (YLIPSLSSFISIIFVLKIFPI). The Cytoplasmic segment spans residues 555 to 687 (ETRDERLDSD…QNSPGDMAVA (133 aa)). Disordered stretches follow at residues 561 to 587 (LDSD…SEFS) and 654 to 687 (SFHN…MAVA). The span at 660-673 (DPNISDNIAANKPS) shows a compositional bias: polar residues.

This sequence belongs to the major facilitator superfamily. Sugar transporter (TC 2.A.1.1) family.

Its subcellular location is the membrane. This Saccharomyces cerevisiae (strain ATCC 204508 / S288c) (Baker's yeast) protein is Putative metabolite transport protein YDL199C.